A 161-amino-acid polypeptide reads, in one-letter code: uncharacterized protein (161 aa).

Residues 1–35 form the signal peptide; that stretch reads MVMAMGFDTVVAAIMATAIIVAVAYTFLAGSTSIA.

This is an uncharacterized protein from Archaeoglobus fulgidus (strain ATCC 49558 / DSM 4304 / JCM 9628 / NBRC 100126 / VC-16).